We begin with the raw amino-acid sequence, 248 residues long: 2,3-bisphosphoglycerate-dependent phosphoglycerate mutase (248 aa).

Substrate-binding positions include Arg8–Asn15, Thr21–Gly22, Arg60, Glu87–Tyr90, Lys98, Arg114–Arg115, and Gly183–Asn184. Residue His9 is the Tele-phosphohistidine intermediate of the active site. The active-site Proton donor/acceptor is the Glu87.

It belongs to the phosphoglycerate mutase family. BPG-dependent PGAM subfamily. Homodimer.

It catalyses the reaction (2R)-2-phosphoglycerate = (2R)-3-phosphoglycerate. It functions in the pathway carbohydrate degradation; glycolysis; pyruvate from D-glyceraldehyde 3-phosphate: step 3/5. Its function is as follows. Catalyzes the interconversion of 2-phosphoglycerate and 3-phosphoglycerate. The chain is 2,3-bisphosphoglycerate-dependent phosphoglycerate mutase from Cupriavidus pinatubonensis (strain JMP 134 / LMG 1197) (Cupriavidus necator (strain JMP 134)).